Here is a 231-residue protein sequence, read N- to C-terminus: tRNA (guanine-N(1)-)-methyltransferase (231 aa).

S-adenosyl-L-methionine is bound by residues G114 and 134–139 (IGDYVL).

The protein belongs to the RNA methyltransferase TrmD family. Homodimer.

It localises to the cytoplasm. It catalyses the reaction guanosine(37) in tRNA + S-adenosyl-L-methionine = N(1)-methylguanosine(37) in tRNA + S-adenosyl-L-homocysteine + H(+). Its function is as follows. Specifically methylates guanosine-37 in various tRNAs. This is tRNA (guanine-N(1)-)-methyltransferase from Clostridioides difficile (strain 630) (Peptoclostridium difficile).